The chain runs to 339 residues: ATPase GET3 (339 aa).

ATP is bound at residue 34 to 41 (KGGVGKTT). Asp63 is a catalytic residue. ATP-binding residues include Glu244 and Asn271. Zn(2+)-binding residues include Cys282 and Cys285.

Belongs to the arsA ATPase family. As to quaternary structure, homodimer.

The protein localises to the cytoplasm. Its subcellular location is the endoplasmic reticulum. In terms of biological role, ATPase required for the post-translational delivery of tail-anchored (TA) proteins to the endoplasmic reticulum. Recognizes and selectively binds the transmembrane domain of TA proteins in the cytosol. This complex then targets to the endoplasmic reticulum by membrane-bound receptors, where the tail-anchored protein is released for insertion. This process is regulated by ATP binding and hydrolysis. ATP binding drives the homodimer towards the closed dimer state, facilitating recognition of newly synthesized TA membrane proteins. ATP hydrolysis is required for insertion. Subsequently, the homodimer reverts towards the open dimer state, lowering its affinity for the membrane-bound receptor, and returning it to the cytosol to initiate a new round of targeting. This is ATPase GET3 from Podospora anserina (strain S / ATCC MYA-4624 / DSM 980 / FGSC 10383) (Pleurage anserina).